The sequence spans 203 residues: Ribonuclease HII (203 aa).

In terms of domain architecture, RNase H type-2 spans 16–203; sequence ENIACCDEVG…HRKSFLNKIL (188 aa). A divalent metal cation is bound by residues aspartate 22, glutamate 23, and aspartate 120.

The protein belongs to the RNase HII family. It depends on Mn(2+) as a cofactor. Mg(2+) serves as cofactor.

It localises to the cytoplasm. It carries out the reaction Endonucleolytic cleavage to 5'-phosphomonoester.. Functionally, endonuclease that specifically degrades the RNA of RNA-DNA hybrids. The sequence is that of Ribonuclease HII from Alkaliphilus oremlandii (strain OhILAs) (Clostridium oremlandii (strain OhILAs)).